A 607-amino-acid polypeptide reads, in one-letter code: Replication factor C large subunit (607 aa).

ATP is bound at residue 55-62 (GPAGIGKT). Positions 468-607 (EEEKPQKEGS…PKNQKTLFDF (140 aa)) are disordered. Residues 506–518 (TSEKKENSEKKEN) are compositionally biased toward basic and acidic residues. Polar residues predominate over residues 548 to 558 (SESVEQKTSSK).

This sequence belongs to the activator 1 small subunits family. RfcL subfamily. Heteromultimer composed of small subunits (RfcS) and large subunits (RfcL).

Its function is as follows. Part of the RFC clamp loader complex which loads the PCNA sliding clamp onto DNA. The polypeptide is Replication factor C large subunit (Methanosarcina acetivorans (strain ATCC 35395 / DSM 2834 / JCM 12185 / C2A)).